Here is a 429-residue protein sequence, read N- to C-terminus: UPF0761 membrane protein ABO_1543 (429 aa).

The next 6 membrane-spanning stretches (helical) occupy residues 45–65 (LFAIVPVMTVSFVVLSSVPAL), 102–122 (LTVLGIVFLVVTSVLMLSTVE), 141–161 (LLMYWALLSLGPICLGLGLAI), 184–204 (WLAVLPFLFTTAMLTLMYTVV), 216–236 (LGAAMAALLFELAKGAFTFFI), and 256–278 (LLWIYISWTIVLGGAELVRALVV).

It belongs to the UPF0761 family.

It localises to the cell inner membrane. The protein is UPF0761 membrane protein ABO_1543 of Alcanivorax borkumensis (strain ATCC 700651 / DSM 11573 / NCIMB 13689 / SK2).